The following is a 101-amino-acid chain: Small ribosomal subunit protein uS14 (101 aa).

It belongs to the universal ribosomal protein uS14 family. In terms of assembly, part of the 30S ribosomal subunit. Contacts proteins S3 and S10.

Binds 16S rRNA, required for the assembly of 30S particles and may also be responsible for determining the conformation of the 16S rRNA at the A site. The protein is Small ribosomal subunit protein uS14 of Buchnera aphidicola subsp. Baizongia pistaciae (strain Bp).